The sequence spans 272 residues: SWIRM domain-containing protein laf2 (272 aa).

Residues 86 to 148 (HVGRWANRHS…RRRKSARGNG (63 aa)) form a disordered region. Low complexity-rich tracts occupy residues 95–120 (SNVS…SYSG) and 127–136 (RSISSSPSTI). Residues serine 130 and serine 132 each carry the phosphoserine modification. Threonine 135 is modified (phosphothreonine). Positions 182–272 (LKAEWKGPPL…AFHEVGFFDD (91 aa)) constitute an SWIRM domain.

In terms of assembly, component of the RPD3C(L) complex.

It is found in the nucleus. Component of the RPD3C(L) histone deacetylase complex (HDAC) responsible for the deacetylation of lysine residues on the N-terminal part of the core histones (H2A, H2B, H3 and H4). Histone deacetylation gives a tag for epigenetic repression and plays an important role in transcriptional regulation, cell cycle progression and developmental events. This is SWIRM domain-containing protein laf2 (laf2) from Schizosaccharomyces pombe (strain 972 / ATCC 24843) (Fission yeast).